The chain runs to 901 residues: MAAQNEQRPERIKTTPYLEGDVLSSDSGPLLSVFALQEIMQKVRQVQADYMTATREVDFTVPDVQKILDDIKTLAAEQVYKIVKVPSISFRHIVMQSRDRVLRVDTYYEEMSQVGDVITEDEPEKFYSTIIKKVRFIRGKGSFILHDIPTRDHRGMEVAEPEVLGVEFKNVLPVLTAEHRAMIQNALDGSIIENGNVATRDVDVFIGACSEPIYRIYNRLQGYIEAVQLQELRNSIGWLERLGQRKRITYSQEVLTDFRRQDTIWVLALQLPVNPQVVWDVPRSSIANLIMNIATCLPTGEYIAPNPRISSITLTQRITTTGPFAILTGSTPTAQQLNDVRKIYLALMFPGQIVLDLKIDPGERMDPAVRMVAGVVGHLLFTAGGRFTNLTQNMARQLDIALNDYLLYMYNTRVQVNYGPTGEPLDFQIGRNQYDCNVFRADFATGTGYNGWATIDVEYRDPAPYVHAQRYIRYCGIDSRELINPTTYGIGMTYHCYNEMLRMLVAAGRDSEAAYFRSMLPFHMVRFARINQIINEDLHSVFSLPDDMFNALLPDLIAGAHQNADPVVLDVSWISLWFAFNRSFEPTHRNEMLEIAPLIESVYASELSVMKVDMRHLSLMQRRFPDVLIQARPSHFWKAVLNDSPEAVKAVMNLSHSHNFINIRDMMRWVLLPSLQPSLKLVLEEEAWAAANDFEDLMLTDQVYMHRDMLPEPRLDDIERFRQEGFYYTNMLEAPPEIDRVVQYTYEIARLQANMGQFRAALRRIMDDDDWVRFGGVLRTVRVKFFDARPPDDILQGLPFSYDTNEKGGLSYATIKYATETTIFYLIYNVEFSNTPDSLVLINPTYTMTKVFINKRIVERVRVGQILAVLNRRFVAYKGKMRIMDITQSLKMGTKLAAPTV.

Belongs to the orbivirus VP3 family.

The protein resides in the virion. Its function is as follows. The VP3 protein is one of the five proteins (with VP1, VP4, VP6 and VP7) which form the inner capsid of the virus. The sequence is that of Core protein VP3 (Segment-3) from Bluetongue virus 10 (isolate USA) (BTV 10).